The chain runs to 226 residues: MTLLILLRHGQSVWNQKNLFTGWVDIPLSQQGIQEAIAAGESIKHLPIDCIFTSTLVRSLMTALLAMTNHSSQKVPYIVHEERPDMSRIHSQKEMEQMIPLFQSSALNERMYGELQGKNKQEVAVQFGEEQVKLWRRSYRIAPPQGESLFDTGQRTLPYFQERIFPLLQQGKNIFISAHGNSLRSLIMDLEKLSEEQVLSLELPTGQPIVYEWTGQKFTKHAPSLG.

Substrate is bound by residues 8 to 15 (RHGQSVWN), 21 to 22 (TG), R58, 109 to 112 (ERMY), K120, 136 to 137 (RR), and 180 to 181 (GN). The active-site Tele-phosphohistidine intermediate is the H9. The active-site Proton donor/acceptor is the E109.

The protein belongs to the phosphoglycerate mutase family. BPG-dependent PGAM subfamily.

It catalyses the reaction (2R)-2-phosphoglycerate = (2R)-3-phosphoglycerate. It functions in the pathway carbohydrate degradation; glycolysis; pyruvate from D-glyceraldehyde 3-phosphate: step 3/5. Catalyzes the interconversion of 2-phosphoglycerate and 3-phosphoglycerate. This Chlamydia trachomatis serovar L2 (strain ATCC VR-902B / DSM 19102 / 434/Bu) protein is 2,3-bisphosphoglycerate-dependent phosphoglycerate mutase.